Consider the following 318-residue polypeptide: Bis(5'-nucleosyl)-tetraphosphatase, symmetrical (318 aa).

The disordered stretch occupies residues 269–318; sequence PGREVTGPAPVARAPRRPRERLGRQRSRGNRGNAGNTAVPAKPPVDTPQD. Basic residues predominate over residues 282–297; it reads APRRPRERLGRQRSRG. Residues 309-318 are compositionally biased toward pro residues; it reads AKPPVDTPQD.

It belongs to the Ap4A hydrolase family.

It catalyses the reaction P(1),P(4)-bis(5'-adenosyl) tetraphosphate + H2O = 2 ADP + 2 H(+). Hydrolyzes diadenosine 5',5'''-P1,P4-tetraphosphate to yield ADP. The sequence is that of Bis(5'-nucleosyl)-tetraphosphatase, symmetrical from Xanthomonas oryzae pv. oryzae (strain PXO99A).